Reading from the N-terminus, the 39-residue chain is Conotoxin Cl14.5 (39 aa).

The propeptide occupies 1 to 16 (PVNEAGVERLFRALVG). At proline 38 the chain carries Proline amide.

Contains 2 disulfide bonds. Expressed by the venom duct.

The protein localises to the secreted. The protein is Conotoxin Cl14.5 of Californiconus californicus (California cone).